Here is a 185-residue protein sequence, read N- to C-terminus: Pro-adrenomedullin (185 aa).

The N-terminal stretch at 1-21 (MKLVSIALMLLGSLAVLGADT) is a signal peptide. Arg41 carries the arginine amide modification. The propeptide occupies 45 to 91 (ELQASSSYPTGLVDEKTVPTQTLGLQDKQSTSSTPQASTQSTAHIRV). Positions 68–89 (GLQDKQSTSSTPQASTQSTAHI) are disordered. Residues 73-87 (QSTSSTPQASTQSTA) show a composition bias toward low complexity. A disulfide bridge connects residues Cys107 and Cys112. The segment at 125-185 (TDKDKDGMAP…HQDISRVSRL (61 aa)) is disordered. Tyr143 is subject to Tyrosine amide. A propeptide spans 150-185 (SLPEVLRARTVESSQEQTHSAPASPAHQDISRVSRL) (preproAM C-terminal fragment). Over residues 160-170 (VESSQEQTHSA) the composition is skewed to polar residues.

It belongs to the adrenomedullin family. Expressed in adrenal glands, lung, kidney, heart, spleen, duodenum and submandibular glands.

The protein localises to the secreted. In terms of biological role, adrenomedullin/ADM and proadrenomedullin N-20 terminal peptide/PAMP are peptide hormones that act as potent hypotensive and vasodilatator agents. Numerous actions have been reported most related to the physiologic control of fluid and electrolyte homeostasis. ADM function is mediated by the CALCRL-RAMP2 and CALCRL-RAMP3 receptor complexes with ADM showing the highest potency for the CALCRL-RAMP2 complex. The polypeptide is Pro-adrenomedullin (Rattus norvegicus (Rat)).